Here is a 397-residue protein sequence, read N- to C-terminus: MAKEKFERNKPHVNVGTIGHVDHGKTTLTAALTRVCSEVFGSARVDFDKIDSAPEEKARGITINTAHVEYDSNVRHYAHVDCPGHADYVKNMITGAAQMDGAILVCSAADGPMPQTREHILLSRQVGVPYIVVFLNKADMVDDAELLELVEMEVRDLLSTYDFPGDDTPIIIGSALMALNGEDDNGLGTTAVKKLVETLDSYIPEPVRAIDKPFLMPIEDVFSISGRGTVVTGRVERGIVKVQEEIEIVGLRPTTKTTCTGVEMFRKLLDEGRAGENCGVLLRGTKRDEVERGQVLAKPGTIKPHTKFEAEVYVLSKEEGGRHTPFFKGYRPQFYFRTTDVTGSCELPEGVEMVMPGDNVKMVVTLIKPIAMEDGLRFAIREGGRTVGAGVVAKIVE.

One can recognise a tr-type G domain in the interval 10-207 (KPHVNVGTIG…TLDSYIPEPV (198 aa)). Positions 19–26 (GHVDHGKT) are G1. GTP is bound at residue 19–26 (GHVDHGKT). Thr26 contributes to the Mg(2+) binding site. The interval 60–64 (GITIN) is G2. The interval 81–84 (DCPG) is G3. GTP is bound by residues 81-85 (DCPGH) and 136-139 (NKAD). Positions 136-139 (NKAD) are G4. A G5 region spans residues 174–176 (SAL).

This sequence belongs to the TRAFAC class translation factor GTPase superfamily. Classic translation factor GTPase family. EF-Tu/EF-1A subfamily. Monomer.

It is found in the cytoplasm. The enzyme catalyses GTP + H2O = GDP + phosphate + H(+). In terms of biological role, GTP hydrolase that promotes the GTP-dependent binding of aminoacyl-tRNA to the A-site of ribosomes during protein biosynthesis. The protein is Elongation factor Tu 1 of Stutzerimonas stutzeri (strain A1501) (Pseudomonas stutzeri).